We begin with the raw amino-acid sequence, 310 residues long: Carbamate kinase 1 (310 aa).

The protein belongs to the carbamate kinase family.

It localises to the cytoplasm. It catalyses the reaction hydrogencarbonate + NH4(+) + ATP = carbamoyl phosphate + ADP + H2O + H(+). It participates in metabolic intermediate metabolism; carbamoyl phosphate degradation; CO(2) and NH(3) from carbamoyl phosphate: step 1/1. The protein is Carbamate kinase 1 (arcC1) of Staphylococcus epidermidis (strain ATCC 12228 / FDA PCI 1200).